The sequence spans 97 residues: Small ribosomal subunit protein bS6 (97 aa).

The protein belongs to the bacterial ribosomal protein bS6 family.

Binds together with bS18 to 16S ribosomal RNA. This chain is Small ribosomal subunit protein bS6, found in Bifidobacterium longum (strain NCC 2705).